We begin with the raw amino-acid sequence, 323 residues long: Prostaglandin F synthase 1 (323 aa).

Residues 20–24 and Asp-50 contribute to the NADP(+) site; that span reads GFGTY. The Proton donor role is filled by Tyr-55. Substrate is bound at residue His-117. Residues 166–167, Gln-190, 216–221, and 270–280 contribute to the NADP(+) site; these read SN, YAALGA, and KSFNKKRIKEN.

It belongs to the aldo/keto reductase family. Monomer. The N-terminus is blocked.

Its subcellular location is the cytoplasm. The enzyme catalyses prostaglandin F2alpha + NADP(+) = prostaglandin D2 + NADPH + H(+). It participates in lipid metabolism; prostaglandin biosynthesis. In terms of biological role, catalyzes the reduction of PGD(2) and PGH(2) to PGF(2 alpha) and a stereoisomer, respectively. It has a broad substrate specificity and also reduces other carbonyl compounds. The protein is Prostaglandin F synthase 1 of Bos taurus (Bovine).